The following is a 360-amino-acid chain: UDP-N-acetylglucosamine--N-acetylmuramyl-(pentapeptide) pyrophosphoryl-undecaprenol N-acetylglucosamine transferase (360 aa).

UDP-N-acetyl-alpha-D-glucosamine-binding residues include serine 198 and glutamine 289.

The protein belongs to the glycosyltransferase 28 family. MurG subfamily.

It localises to the cell membrane. The enzyme catalyses Mur2Ac(oyl-L-Ala-gamma-D-Glu-L-Lys-D-Ala-D-Ala)-di-trans,octa-cis-undecaprenyl diphosphate + UDP-N-acetyl-alpha-D-glucosamine = beta-D-GlcNAc-(1-&gt;4)-Mur2Ac(oyl-L-Ala-gamma-D-Glu-L-Lys-D-Ala-D-Ala)-di-trans,octa-cis-undecaprenyl diphosphate + UDP + H(+). It participates in cell wall biogenesis; peptidoglycan biosynthesis. Functionally, cell wall formation. Catalyzes the transfer of a GlcNAc subunit on undecaprenyl-pyrophosphoryl-MurNAc-pentapeptide (lipid intermediate I) to form undecaprenyl-pyrophosphoryl-MurNAc-(pentapeptide)GlcNAc (lipid intermediate II). This is UDP-N-acetylglucosamine--N-acetylmuramyl-(pentapeptide) pyrophosphoryl-undecaprenol N-acetylglucosamine transferase from Streptococcus pyogenes serotype M49 (strain NZ131).